A 354-amino-acid chain; its full sequence is MADAITYADLRFVKVPLKNSASNHLGQDCEAYEDGELTYENVQVSPVPGGPPGLASPALADKAGVGSEQPTATWSSVNSSALRQIPRCPTVCLQYFLLGLLVSCLMLGVAVICLGVRYLQVSRQFQEGTRIWEATNSSLQQQLREKISQLGQKEVELQKARKELISSQDTLQEKQRTHEDAEQQLQACQAERAKTKENLKTEEERRRDLDQRLTSTRETLRRFFSDSSDTCCPCGWIPYQERCFYISHTLGSLEESQKYCTSLSSKLAAFDEPSKYYYEVSLPSGLEELLDRSKSYWIQMSKKWRQDSDSQSRHCVRIKTYYQKWERTISKCAELHPCICESEAFRFPDGINLN.

Topologically, residues 1–95 are cytoplasmic; it reads MADAITYADL…PRCPTVCLQY (95 aa). Phosphotyrosine; by LYN is present on residues Y7 and Y39. A helical; Signal-anchor for type II membrane protein membrane pass occupies residues 96-116; sequence FLLGLLVSCLMLGVAVICLGV. The Extracellular portion of the chain corresponds to 117 to 354; the sequence is RYLQVSRQFQ…FRFPDGINLN (238 aa). N136 carries an N-linked (GlcNAc...) asparagine glycan. Residues 231-342 form the C-type lectin domain; that stretch reads CCPCGWIPYQ…AELHPCICES (112 aa). 3 disulfide bridges follow: C232–C243, C260–C340, and C315–C332.

In terms of assembly, homodimer; disulfide-linked. Associates with CD5. Interacts (tyrosine phosphorylated) with PTPN6/SHP-1. Phosphorylated upon engagement of the B-cell receptor, probably by LYN or SYK. Phosphorylation at Tyr-7 is important for interaction with PTPN6/SHP-1. In terms of tissue distribution, pre-B-cells and B-cells but not terminally differentiated plasma cells.

It localises to the membrane. Co-receptor of B cell receptor (BCR) that plays both positive and negative roles on B-cell functions. Recognizes the Sm/ribonucleoprotein (RNP) self-antigen ligand, and coligation of CD72 and BCR inhibits BCR signaling. Mechanistically, ligand binding leads to the recruitment of PTPN6/SHP-1 to the BCR complex which is inhibitory to BCR signaling. Acts also as a ligand for CD5 and thereby plays a critical role in maintaining regulatory T and B-cell homeostasis. The sequence is that of B-cell differentiation antigen CD72 (Cd72) from Mus musculus (Mouse).